Here is a 353-residue protein sequence, read N- to C-terminus: Lipase-specific foldase (353 aa).

Residues 1-19 (MAQADRPARGGLAARPMRG) lie on the Cytoplasmic side of the membrane. Residues 20–40 (ASFALAGLVACAACAAVVLWL) traverse the membrane as a helical segment. Over 41-353 (RPAAPSPAPA…AASLDRGAGG (313 aa)) the chain is Periplasmic.

The protein belongs to the lipase chaperone family. As to quaternary structure, monomer. Interacts with lipase (lip).

The protein resides in the cell inner membrane. Functionally, involved in the folding of the extracellular lipase (lip) during its passage through the periplasm. This is Lipase-specific foldase from Burkholderia plantarii.